The following is a 167-amino-acid chain: Novel acetylcholine receptor chaperone (167 aa).

Residues 1-5 (MASPR) are Cytoplasmic-facing. Residues 6-26 (TVTIVALSVALGLFFVFMGTI) traverse the membrane as a helical segment. The Lumenal portion of the chain corresponds to 27 to 61 (KLTPRLSKDAYSEMKRAYKSYVRALPLLKKMGINS). The tract at residues 43-54 (AYKSYVRALPLL) is interaction with NGFR. Residues 62 to 82 (ILLRKSIGALEVACGIVMTLV) form a helical membrane-spanning segment. At 83-88 (PGRPKD) the chain is on the cytoplasmic side. A helical membrane pass occupies residues 89-109 (VANFFLLLLVLAVLFFHQLVG). Residues 110-114 (DPLKR) lie on the Lumenal side of the membrane. A helical membrane pass occupies residues 115 to 132 (YAHALVFGILLTCRLLIA). Topologically, residues 133-167 (RKPEDRSSEKKPLPGNAEEQPSLYEKAPQGKVKVS) are cytoplasmic. The segment at 136-167 (EDRSSEKKPLPGNAEEQPSLYEKAPQGKVKVS) is disordered.

It belongs to the DoxX family. In terms of assembly, may interact with NGFR. Interacts with RPN1, RPN2 and CANX.

It is found in the peroxisome membrane. It localises to the cytoplasmic vesicle. The protein localises to the endoplasmic reticulum membrane. Molecular chaperone which mediates the proper assembly and functional expression of the nicotinic acetylcholine receptors (nAChRs) throughout the brain. Essential for the proper folding, assembly, function and surface trafficking of alpha-7 (CHRNA7), alpha-4-beta-2, alpha-3-beta-2 and alpha-3-beta-4 receptors. Stably associates with ribophorin-1 (RPN1) and ribophorin-2 (RPN2) (components of the oligosaccharyl transferase (OST) complex) and with calnexin (CANX), both of which are critical for NACHO-mediated effects on CHRNA7 assembly and function. Facilitates the proper folding and assembly of alpha-6-beta-2 and alpha-6-beta-2-beta-3 receptors and acts at early stages of the nAChRs subunit assembly. Promotes the expression of the alpha-4(2):beta-2(3) stoichiometric form over the alpha-4(3):beta-2(2) form. This is Novel acetylcholine receptor chaperone (TMEM35A) from Macaca fascicularis (Crab-eating macaque).